Here is a 262-residue protein sequence, read N- to C-terminus: Type III pantothenate kinase (262 aa).

ATP is bound at residue 12–19; sequence DIGNTSIA. Residues Y94 and 109–112 each bind substrate; that span reads GSDV. The Proton acceptor role is filled by D111. D132 is a binding site for K(+). T135 contacts ATP. T187 is a substrate binding site.

Belongs to the type III pantothenate kinase family. In terms of assembly, homodimer. It depends on NH4(+) as a cofactor. Requires K(+) as cofactor.

It localises to the cytoplasm. The catalysed reaction is (R)-pantothenate + ATP = (R)-4'-phosphopantothenate + ADP + H(+). It participates in cofactor biosynthesis; coenzyme A biosynthesis; CoA from (R)-pantothenate: step 1/5. Its function is as follows. Catalyzes the phosphorylation of pantothenate (Pan), the first step in CoA biosynthesis. This Borreliella burgdorferi (strain ATCC 35210 / DSM 4680 / CIP 102532 / B31) (Borrelia burgdorferi) protein is Type III pantothenate kinase.